The following is a 128-amino-acid chain: Large ribosomal subunit protein bL12 (128 aa).

The protein belongs to the bacterial ribosomal protein bL12 family. Homodimer. Part of the ribosomal stalk of the 50S ribosomal subunit. Forms a multimeric L10(L12)X complex, where L10 forms an elongated spine to which 2 to 4 L12 dimers bind in a sequential fashion. Binds GTP-bound translation factors.

Functionally, forms part of the ribosomal stalk which helps the ribosome interact with GTP-bound translation factors. Is thus essential for accurate translation. This Corynebacterium jeikeium (strain K411) protein is Large ribosomal subunit protein bL12.